The chain runs to 256 residues: MRAIDLNSDLGESFGAWSMGDDAAMLDIVTSANVACGFHAGDPAGILRTLKAAAAKNVTIGAHVSYPDKVGFGRRNMDVASDELTADVIYQIGSLQGLAKAAGTSVRYVKPHGALYNTIAHDRRQAMAVIEAIRAIDPALVLVALAGSTLIELARSEGLQCIAEAFADRAYTPQGTLVSRREPGAVLHDPELVAQRMLRLVQSGSIEAIDGSLVRIEADSICVHGDSPAAVEMARELRRVLEQASTSLQPFAGKRS.

It belongs to the LamB/PxpA family. In terms of assembly, forms a complex composed of PxpA, PxpB and PxpC.

The catalysed reaction is 5-oxo-L-proline + ATP + 2 H2O = L-glutamate + ADP + phosphate + H(+). Its function is as follows. Catalyzes the cleavage of 5-oxoproline to form L-glutamate coupled to the hydrolysis of ATP to ADP and inorganic phosphate. The chain is 5-oxoprolinase subunit A 3 from Pseudomonas syringae pv. tomato (strain ATCC BAA-871 / DC3000).